Reading from the N-terminus, the 233-residue chain is Protein DEHYDRATION-INDUCED 19 homolog 2 (233 aa).

The interval 176-215 is disordered; the sequence is DLHSDSSDNNFLLNKFPDDKTAERAEPSLSEKDQKERAQR. Positions 191-214 are enriched in basic and acidic residues; sequence FPDDKTAERAEPSLSEKDQKERAQ.

The protein belongs to the Di19 family.

The protein is Protein DEHYDRATION-INDUCED 19 homolog 2 (DI19-2) of Oryza sativa subsp. japonica (Rice).